A 304-amino-acid chain; its full sequence is Glutaminase (304 aa).

Substrate is bound by residues S63, N114, E158, N165, Y189, Y240, and V258.

The protein belongs to the glutaminase family. Homotetramer.

The enzyme catalyses L-glutamine + H2O = L-glutamate + NH4(+). In Shewanella oneidensis (strain ATCC 700550 / JCM 31522 / CIP 106686 / LMG 19005 / NCIMB 14063 / MR-1), this protein is Glutaminase.